The chain runs to 485 residues: Tektin-5 (485 aa).

Coiled coils occupy residues 114–185 (RLTD…EVNC), 225–247 (QEQMRKLAQRIDIQMRDNRDAQH), 307–385 (QNMR…MAKE), and 421–444 (TIDDTLQTLKLRLRETQDTLQLLV).

Belongs to the tektin family. As to quaternary structure, microtubule inner protein component of sperm flagellar doublet microtubules. Interacts with TEKT3. Post-translationally, ubiquitinated, leading to its degradation. Deubiquitinated by USP16, promoting its stability.

It is found in the cytoplasm. It localises to the cytoskeleton. Its subcellular location is the flagellum axoneme. Sperm-specific microtubule inner protein (MIP) part of the dynein-decorated doublet microtubules (DMTs) in flagellar axoneme. Forms an extensive interaction network in different conformations that reinforces the helix bundle composed by other tektin proteins (TEKT1 to TEKT4) and MIPs to anchor the tektin bundle onto the tubulin wall of A-tubule of the sperm flagellum. This Homo sapiens (Human) protein is Tektin-5 (TEKT5).